Reading from the N-terminus, the 111-residue chain is Small ribosomal subunit protein bS6 (111 aa).

Belongs to the bacterial ribosomal protein bS6 family.

In terms of biological role, binds together with bS18 to 16S ribosomal RNA. In Francisella philomiragia subsp. philomiragia (strain ATCC 25017 / CCUG 19701 / FSC 153 / O#319-036), this protein is Small ribosomal subunit protein bS6.